Consider the following 1576-residue polypeptide: Spermatogenesis-associated protein 31D1 (1576 aa).

The chain crosses the membrane as a helical span at residues 29 to 49 (FICLSGLGLFILYLFYVVLTL). Disordered regions lie at residues 170–197 (FTLASTPSATPPEDLILSPRPKASPPPP), 542–572 (HESPVLPPPQPLSLPSTQPLPLPQTLPQGQS), 782–801 (KDHLLHGPETSSDKDLRSNS), 952–1033 (SQGD…TDFQ), and 1293–1347 (RVSP…PPPE). A compositionally biased stretch (pro residues) spans 546-565 (VLPPPQPLSLPSTQPLPLPQ). Residues 966 to 980 (RSTFQGEKLGTTSSV) show a composition bias toward polar residues. Residues 1004–1019 (QFSDTDHDLIETDSKD) show a composition bias toward basic and acidic residues. Over residues 1020–1032 (GASTSLRRGTTDF) the composition is skewed to polar residues.

This sequence belongs to the SPATA31 family.

It localises to the membrane. Its function is as follows. May play a role in spermatogenesis. The chain is Spermatogenesis-associated protein 31D1 (SPATA31D1) from Homo sapiens (Human).